The sequence spans 457 residues: Siroheme synthase (457 aa).

The tract at residues 1-204 is precorrin-2 dehydrogenase /sirohydrochlorin ferrochelatase; it reads MDHLPIFCQL…ADEKAVNATT (204 aa). NAD(+) contacts are provided by residues 22–23 and 43–44; these read DV and LT. Phosphoserine is present on Ser-128. The interval 216–457 is uroporphyrinogen-III C-methyltransferase; it reads GEVVLVGAGP…RDKLNWFSNY (242 aa). Pro-225 lines the S-adenosyl-L-methionine pocket. The active-site Proton acceptor is the Asp-248. The active-site Proton donor is Lys-270. S-adenosyl-L-methionine-binding positions include 301–303, Ile-306, 331–332, Met-382, and Gly-411; these read GGD and TA.

In the N-terminal section; belongs to the precorrin-2 dehydrogenase / sirohydrochlorin ferrochelatase family. The protein in the C-terminal section; belongs to the precorrin methyltransferase family.

It catalyses the reaction uroporphyrinogen III + 2 S-adenosyl-L-methionine = precorrin-2 + 2 S-adenosyl-L-homocysteine + H(+). The enzyme catalyses precorrin-2 + NAD(+) = sirohydrochlorin + NADH + 2 H(+). The catalysed reaction is siroheme + 2 H(+) = sirohydrochlorin + Fe(2+). Its pathway is cofactor biosynthesis; adenosylcobalamin biosynthesis; precorrin-2 from uroporphyrinogen III: step 1/1. The protein operates within cofactor biosynthesis; adenosylcobalamin biosynthesis; sirohydrochlorin from precorrin-2: step 1/1. It participates in porphyrin-containing compound metabolism; siroheme biosynthesis; precorrin-2 from uroporphyrinogen III: step 1/1. It functions in the pathway porphyrin-containing compound metabolism; siroheme biosynthesis; siroheme from sirohydrochlorin: step 1/1. Its pathway is porphyrin-containing compound metabolism; siroheme biosynthesis; sirohydrochlorin from precorrin-2: step 1/1. Its function is as follows. Multifunctional enzyme that catalyzes the SAM-dependent methylations of uroporphyrinogen III at position C-2 and C-7 to form precorrin-2 via precorrin-1. Then it catalyzes the NAD-dependent ring dehydrogenation of precorrin-2 to yield sirohydrochlorin. Finally, it catalyzes the ferrochelation of sirohydrochlorin to yield siroheme. The polypeptide is Siroheme synthase (Salmonella gallinarum (strain 287/91 / NCTC 13346)).